Here is a 453-residue protein sequence, read N- to C-terminus: ATP-dependent protease ATPase subunit HslU (453 aa).

Residues isoleucine 18, 60–65 (GVGKTE), aspartate 266, glutamate 331, and arginine 403 contribute to the ATP site.

Belongs to the ClpX chaperone family. HslU subfamily. As to quaternary structure, a double ring-shaped homohexamer of HslV is capped on each side by a ring-shaped HslU homohexamer. The assembly of the HslU/HslV complex is dependent on binding of ATP.

Its subcellular location is the cytoplasm. ATPase subunit of a proteasome-like degradation complex; this subunit has chaperone activity. The binding of ATP and its subsequent hydrolysis by HslU are essential for unfolding of protein substrates subsequently hydrolyzed by HslV. HslU recognizes the N-terminal part of its protein substrates and unfolds these before they are guided to HslV for hydrolysis. This chain is ATP-dependent protease ATPase subunit HslU, found in Desulforapulum autotrophicum (strain ATCC 43914 / DSM 3382 / VKM B-1955 / HRM2) (Desulfobacterium autotrophicum).